A 97-amino-acid chain; its full sequence is SAGA-associated factor 11 (97 aa).

The SGF11-type zinc-finger motif lies at 70–91 (IECNVCGREVSGNRFAAHLVRC).

The protein belongs to the SGF11 family. As to quaternary structure, component of the 1.8 MDa SAGA transcription coactivator-HAT complex. SAGA is built of 5 distinct domains with specialized functions. Within the SAGA complex, SUS1, SGF11, SGF73 and UBP8 form an additional subcomplex of SAGA called the DUB module (deubiquitination module). Interacts directly with SGF73, SUS1 and UBP8.

Its subcellular location is the nucleus. Its function is as follows. Functions as a component of the transcription regulatory histone acetylation (HAT) complex SAGA. At the promoters, SAGA is required for recruitment of the basal transcription machinery. It influences RNA polymerase II transcriptional activity through different activities such as TBP interaction and promoter selectivity, interaction with transcription activators, and chromatin modification through histone acetylation and deubiquitination. SAGA acetylates nucleosomal histone H3 to some extent (to form H3K9ac, H3K14ac, H3K18ac and H3K23ac). SAGA interacts with DNA via upstream activating sequences (UASs). Involved in transcriptional regulation of a subset of SAGA-regulated genes. Within the SAGA complex, participates in a subcomplex, that specifically deubiquitinates histones H2B. The chain is SAGA-associated factor 11 from Kluyveromyces lactis (strain ATCC 8585 / CBS 2359 / DSM 70799 / NBRC 1267 / NRRL Y-1140 / WM37) (Yeast).